A 415-amino-acid chain; its full sequence is Cell division control protein 11 (415 aa).

Serine 2 carries the post-translational modification N-acetylserine. Serine 2 is modified (phosphoserine). Residues 12–19 carry the Basic motif motif; sequence RKRKHLKR. The Septin-type G domain occupies 19–298; the sequence is RGITFTVMIV…ERYRTEALSG (280 aa). Positions 29–36 are G1 motif; sequence GQSGSGRS. Residues 29–36, glycine 92, 172–180, glycine 230, and arginine 247 contribute to the GTP site; these read GQSGSGRS and KSDSLTRDE. The segment at 89-92 is G3 motif; sequence DTPG. The interval 171 to 174 is G4 motif; sequence SKSD. At serine 305 the chain carries Phosphoserine. Positions 307–360 are disordered; that stretch reads RPNLTKLNGSSSSSTTTRRNTNPFKQSNNINNDVLNPASDMHGQSTGENNETYM. Over residues 316–328 the composition is skewed to low complexity; sequence SSSSSTTTRRNTN. Threonine 327 carries the post-translational modification Phosphothreonine. Composition is skewed to polar residues over residues 329–340 and 348–359; these read PFKQSNNINNDV and HGQSTGENNETY. Residues 354–414 are a coiled coil; the sequence is ENNETYMTRE…LEKEAKIKQE (61 aa). Lysine 412 participates in a covalent cross-link: Glycyl lysine isopeptide (Lys-Gly) (interchain with G-Cter in SUMO).

It belongs to the TRAFAC class TrmE-Era-EngA-EngB-Septin-like GTPase superfamily. Septin GTPase family. In terms of assembly, component of the septin complex which consists of CDC3, CDC10, CDC11, CDC12 and probably SHS1 and rearranges to a cortical collar of highly ordered filaments at the mother-bud-neck. A complex formed by CDC3, CDC10, CDC11 and CDC12 is capable of forming long filaments in vitro and the components seem to be present in a 2:2:2:2 arrangement in vivo. The filaments are proposed to be formed by the end-to-end polymerization of CDC3-CDC12-CDC11 complexes with CDC10 serving as a bridge to bundle the polymers into paired filaments. Component of the GIN4 complex composed of at least BNI5, CDC3, CDC10, CDC11, CDC12, GIN4, NAP1 and SHS1. Self-associates. Interacts with BEM4, KCC4, SPR28 and SYP1. Interacts with BNI5. Post-translationally, sumoylated during mitosis on the mother cell side of the bud neck. Sumoylation probably plays a central role in regulating septin ring disassembly during the cell cycle.

The protein resides in the membrane. It localises to the bud neck. In terms of biological role, septins are GTPases involved in cytokinesis that assemble early in the cell cycle as a patch at the incipient bud site and form a ring approximate 15 minutes before bud emergence, which transforms into an hour-glass shaped collar of cortical filaments that spans both sides of the mother-bud neck. This collar persists until just before cytokinesis, when it splits into two rings that occupy opposite sides of the neck. The septins at the bud neck serve as a structural scaffold that recruits different components involved in diverse processes at specific stages during the cell cycle. Many proteins bind asymmetrically to the septin collar. The septin assembly is regulated by protein kinases GIN4 and/or CLA4. May act by recruiting MYO1 and HOF1, a protein involved in septation, to the site of cleavage. Septins are also involved in cell morphogenesis, bud site selection, chitin deposition, cell cycle regulation, cell compartmentalization and spore wall formation. CDCd11 with SHS1 11 are involved in the recruitment of BNI5 and thereby ensure efficient localization at the bud neck of MYO1, the type II myosin of the actomyosin contractile ring. The protein is Cell division control protein 11 of Saccharomyces cerevisiae (strain ATCC 204508 / S288c) (Baker's yeast).